Here is a 1135-residue protein sequence, read N- to C-terminus: Topless-related protein 4 (1135 aa).

Positions 4-36 constitute a LisH domain; the sequence is LSRELVFLILQFLDEEKFKDTVHRLEKESGFFF. In terms of domain architecture, CTLH spans 34 to 92; it reads FFFNMRYFEDSVTAGEWDDVEKYLSGFTKVDDNRYSMKIFFEIRKQKYLEALDKKDHAK. A Phosphoserine modification is found at S214. Positions 281-303 are disordered; the sequence is LKRERPRSPPTNSLSMDYQTADS. Polar residues predominate over residues 290–303; it reads PTNSLSMDYQTADS. WD repeat units follow at residues 355–395, 417–456, 462–503, 506–547, 550–593, 597–636, 638–680, 776–815, 843–881, 884–924, 927–966, and 1020–1059; these read SQGS…KLVS, EYTA…DLRN, AHAG…KLHT, GHEA…SRVD, APGR…VKRT, LGKR…LLSS, AAEG…RILH, LLPA…RNLL, NKED…TMTT, APPP…VKSK, GHQK…KQAS, and ESSG…LKCR. A disordered region spans residues 1095 to 1135; sequence DGGVHVIEPPGPEGKWGISAPPENGAGPSVSSAPGSDQQPR. The span at 1119–1135 shows a compositional bias: low complexity; it reads GAGPSVSSAPGSDQQPR.

In terms of assembly, tetramer. Interacts with WUS (via the C-terminal domain). Interacts with SPL (via EAR motif). Interacts with SPEAR3/TIE1. Binds to and corepresses GAF1/IDD2 at the promoter of GA20OX2 gene.

The protein localises to the nucleus. Its function is as follows. Transcription corepressor of Zinc finger transcription factors GAF1/IDD2 and ENY/IDD1 in regulation of gibberellin homeostasis and signaling. The polypeptide is Topless-related protein 4 (TPR4) (Arabidopsis thaliana (Mouse-ear cress)).